The primary structure comprises 110 residues: V-type proton ATPase subunit G1 (110 aa).

Methionine 1 is subject to N-acetylmethionine. A disordered region spans residues lysine 60–aspartate 80.

The protein belongs to the V-ATPase G subunit family. As to quaternary structure, V-ATPase is a heteromultimeric enzyme composed of a peripheral catalytic V1 complex (components A to H) attached to an integral membrane V0 proton pore complex (components: a, c, c'', d and e).

Its subcellular location is the cell membrane. It localises to the vacuole membrane. Functionally, catalytic subunit of the peripheral V1 complex of vacuolar ATPase (V-ATPase). V-ATPase is responsible for acidifying a variety of intracellular compartments in eukaryotic cells. The chain is V-type proton ATPase subunit G1 (VHA-G1) from Arabidopsis thaliana (Mouse-ear cress).